The sequence spans 251 residues: DNA repair protein RecO (251 aa).

Belongs to the RecO family.

Its function is as follows. Involved in DNA repair and RecF pathway recombination. This Macrococcus caseolyticus (strain JCSC5402) (Macrococcoides caseolyticum) protein is DNA repair protein RecO.